The sequence spans 163 residues: Peptide methionine sulfoxide reductase MsrA 1 (163 aa).

Residue Cys-21 is part of the active site.

Belongs to the MsrA Met sulfoxide reductase family.

It catalyses the reaction L-methionyl-[protein] + [thioredoxin]-disulfide + H2O = L-methionyl-(S)-S-oxide-[protein] + [thioredoxin]-dithiol. It carries out the reaction [thioredoxin]-disulfide + L-methionine + H2O = L-methionine (S)-S-oxide + [thioredoxin]-dithiol. Its function is as follows. Has an important function as a repair enzyme for proteins that have been inactivated by oxidation. Catalyzes the reversible oxidation-reduction of methionine sulfoxide in proteins to methionine. The chain is Peptide methionine sulfoxide reductase MsrA 1 (msrA1) from Nostoc sp. (strain PCC 7120 / SAG 25.82 / UTEX 2576).